The chain runs to 304 residues: Tyrosine recombinase XerC (304 aa).

In terms of domain architecture, Core-binding (CB) spans 6–92; that stretch reads NKLYLQAQAY…VLRQWFAYLV (87 aa). The 180-residue stretch at 113-292 folds into the Tyr recombinase domain; the sequence is HLPKNIDAER…DFQHLAKIYD (180 aa). Active-site residues include Arg-152, Lys-176, His-244, Arg-247, and His-270. The O-(3'-phospho-DNA)-tyrosine intermediate role is filled by Tyr-279.

Belongs to the 'phage' integrase family. XerC subfamily. As to quaternary structure, forms a cyclic heterotetrameric complex composed of two molecules of XerC and two molecules of XerD.

It localises to the cytoplasm. Site-specific tyrosine recombinase, which acts by catalyzing the cutting and rejoining of the recombining DNA molecules. The XerC-XerD complex is essential to convert dimers of the bacterial chromosome into monomers to permit their segregation at cell division. It also contributes to the segregational stability of plasmids. The protein is Tyrosine recombinase XerC of Haemophilus ducreyi (strain 35000HP / ATCC 700724).